The primary structure comprises 331 residues: Protein RecA (331 aa).

Position 66–73 (66–73 (GPESSGKT)) interacts with ATP.

This sequence belongs to the RecA family.

Its subcellular location is the cytoplasm. Its function is as follows. Can catalyze the hydrolysis of ATP in the presence of single-stranded DNA, the ATP-dependent uptake of single-stranded DNA by duplex DNA, and the ATP-dependent hybridization of homologous single-stranded DNAs. It interacts with LexA causing its activation and leading to its autocatalytic cleavage. This is Protein RecA from Lactobacillus delbrueckii subsp. bulgaricus (strain ATCC 11842 / DSM 20081 / BCRC 10696 / JCM 1002 / NBRC 13953 / NCIMB 11778 / NCTC 12712 / WDCM 00102 / Lb 14).